The following is a 522-amino-acid chain: Maturase K (522 aa).

This sequence belongs to the intron maturase 2 family. MatK subfamily.

It localises to the plastid. The protein resides in the chloroplast. In terms of biological role, usually encoded in the trnK tRNA gene intron. Probably assists in splicing its own and other chloroplast group II introns. The polypeptide is Maturase K (Iris danfordiae (Danford iris)).